Here is a 633-residue protein sequence, read N- to C-terminus: Extracellular metalloproteinase 3 (633 aa).

An N-terminal signal peptide occupies residues 1 to 18 (MHGLLLAGLLALPMNVLA). Residues 19-246 (HPAEQQTSSV…VHNVVDYVAS (228 aa)) constitute a propeptide that is removed on maturation. Asparagine 410 carries N-linked (GlcNAc...) asparagine glycosylation. Position 429 (histidine 429) interacts with Zn(2+). Residue glutamate 430 is part of the active site. Histidine 433 is a binding site for Zn(2+). N-linked (GlcNAc...) asparagine glycosylation occurs at asparagine 480.

Belongs to the peptidase M36 family. Requires Zn(2+) as cofactor.

It is found in the secreted. In terms of biological role, secreted metalloproteinase probably acting as a virulence factor. This is Extracellular metalloproteinase 3 (MEP3) from Arthroderma otae (Microsporum canis).